A 252-amino-acid polypeptide reads, in one-letter code: MKELLNDFFLILQLLTRIPVNRNLLCRRENFRRGASFMPLVGVIVGGIQWIIYKLCIIIFSLNVSIVIVILAGIVLTGALHVDGLGDMCDGFFSFKEKGKIIEIMKDSRIGTYACLAIIIDILLKYSFFCSIVPSFSLIIIIAPVMSRFSIVFIAFIGKPAKSTGSGNLFVENIGKWQLFWAAFITVITLFFLMNMNFIYVIILIFAGLFMSFLFNVFCNRKAGGLTGDLLGANNEIVEILTMVMLCVIITK.

Helical transmembrane passes span 34-54 (GASF…IIYK), 55-75 (LCII…AGIV), 113-133 (YACL…CSIV), 138-158 (LIII…AFIG), 174-194 (IGKW…FFLM), 198-218 (FIYV…FNVF), and 230-250 (LLGA…CVII).

The protein belongs to the CobS family. Mg(2+) serves as cofactor.

The protein localises to the cell membrane. The enzyme catalyses alpha-ribazole + adenosylcob(III)inamide-GDP = adenosylcob(III)alamin + GMP + H(+). It carries out the reaction alpha-ribazole 5'-phosphate + adenosylcob(III)inamide-GDP = adenosylcob(III)alamin 5'-phosphate + GMP + H(+). Its pathway is cofactor biosynthesis; adenosylcobalamin biosynthesis; adenosylcobalamin from cob(II)yrinate a,c-diamide: step 7/7. Its function is as follows. Joins adenosylcobinamide-GDP and alpha-ribazole to generate adenosylcobalamin (Ado-cobalamin). Also synthesizes adenosylcobalamin 5'-phosphate from adenosylcobinamide-GDP and alpha-ribazole 5'-phosphate. In Clostridium kluyveri (strain NBRC 12016), this protein is Adenosylcobinamide-GDP ribazoletransferase.